A 312-amino-acid polypeptide reads, in one-letter code: Malate dehydrogenase (312 aa).

Residues 7 to 13 (GAAGGIG) and aspartate 34 each bind NAD(+). Substrate is bound by residues arginine 81 and arginine 87. NAD(+) contacts are provided by residues asparagine 94 and 117–119 (ITN). Positions 119 and 153 each coordinate substrate. The active-site Proton acceptor is the histidine 177. Methionine 227 lines the NAD(+) pocket.

It belongs to the LDH/MDH superfamily. MDH type 1 family. As to quaternary structure, homodimer.

It catalyses the reaction (S)-malate + NAD(+) = oxaloacetate + NADH + H(+). Its function is as follows. Catalyzes the reversible oxidation of malate to oxaloacetate. In Photobacterium profundum (strain SS9), this protein is Malate dehydrogenase.